Consider the following 862-residue polypeptide: Valine--tRNA ligase (862 aa).

A 'HIGH' region motif is present at residues Pro43 to His53. The Zn(2+) site is built by Cys176, Cys179, Cys344, Cys347, Cys417, Cys420, Cys438, and Cys441. Positions Lys528–Ser532 match the 'KMSKS' region motif. Lys531 contributes to the ATP binding site. The stretch at Arg802–Gly862 forms a coiled coil.

The protein belongs to the class-I aminoacyl-tRNA synthetase family. ValS type 1 subfamily. In terms of assembly, monomer. It depends on Zn(2+) as a cofactor.

It localises to the cytoplasm. The catalysed reaction is tRNA(Val) + L-valine + ATP = L-valyl-tRNA(Val) + AMP + diphosphate. Catalyzes the attachment of valine to tRNA(Val). As ValRS can inadvertently accommodate and process structurally similar amino acids such as threonine, to avoid such errors, it has a 'posttransfer' editing activity that hydrolyzes mischarged Thr-tRNA(Val) in a tRNA-dependent manner. The chain is Valine--tRNA ligase from Thermus thermophilus (strain ATCC BAA-163 / DSM 7039 / HB27).